The chain runs to 370 residues: 2-Hydroxyacid oxidase 1 (370 aa).

An FMN hydroxy acid dehydrogenase domain is found at 1 to 365; that stretch reads MLPRLICIND…DKTLVRKNPL (365 aa). Glyoxylate is bound at residue Y26. Residues 79-81, S108, and Q130 each bind FMN; that span reads ATA. Y132 contacts glyoxylate. T158 is an FMN binding site. R167 contacts glyoxylate. K184 is modified (N6-succinyllysine). A phosphoserine mark is found at S194 and S230. Positions 236 and 258 each coordinate FMN. 2 residues coordinate glyoxylate: H260 and R263. H260 functions as the Proton acceptor in the catalytic mechanism. FMN contacts are provided by residues 291-295 and 314-315; these read DGGVR and GR. A Microbody targeting signal motif is present at residues 368–370; it reads SKI.

The protein belongs to the FMN-dependent alpha-hydroxy acid dehydrogenase family. As to quaternary structure, homotetramer. FMN serves as cofactor. As to expression, highly expressed in liver.

Its subcellular location is the peroxisome matrix. It carries out the reaction a (2S)-2-hydroxycarboxylate + O2 = a 2-oxocarboxylate + H2O2. The enzyme catalyses glycolate + O2 = glyoxylate + H2O2. It catalyses the reaction glyoxylate + O2 + H2O = oxalate + H2O2 + H(+). The catalysed reaction is 2-hydroxyhexadecanoate + O2 = 2-oxohexadecanoate + H2O2. It carries out the reaction 2-hydroxyoctanoate + O2 = 2-oxooctanoate + H2O2. Its pathway is amino-acid biosynthesis; glycine biosynthesis. Its activity is regulated as follows. Inhibited by its product oxalate. Inhibited by high concentrations of dichlorophenolindophenol (DCIP) in vitro. Its function is as follows. Broad substrate specificity (S)-2-hydroxy-acid oxidase that preferentially oxidizes glycolate. The glyoxylate produced by the oxidation of glycolate can then be utilized by alanine-glyoxylate aminotransferase for the peroxisomal synthesis of glycine; this pathway appears to be an important step for the detoxification of glyoxylate which, if allowed to accumulate, may be metabolized to oxalate with formation of kidney stones. Can also catalyze the oxidation of glyoxylate, and long chain hydroxyacids such as 2-hydroxyhexadecanoate and 2-hydroxyoctanoate, albeit with much lower catalytic efficiency. Active in vitro with the artificial electron acceptor 2,6-dichlorophenolindophenol (DCIP), but O2 is believed to be the physiological electron acceptor, leading to the production of H2O2. Is not active on L-lactate and 2-hydroxybutanoate. The chain is 2-Hydroxyacid oxidase 1 from Homo sapiens (Human).